We begin with the raw amino-acid sequence, 861 residues long: Ataxin-7-like protein 1 (861 aa).

Disordered stretches follow at residues 1–31 (MTSE…AMAT), 154–189 (GHHS…KGSR), 342–448 (KSRE…GADE), 606–673 (PIPA…LSGP), and 772–861 (FDKS…RTLP). Positions 284 to 351 (RRLSEREFDP…KSREKEVKDK (68 aa)) constitute an SCA7 domain. Positions 342–354 (KSREKEVKDKEHL) are enriched in basic and acidic residues. The span at 355–369 (LTSTREILPSQSGPA) shows a compositional bias: polar residues. 3 stretches are compositionally biased toward low complexity: residues 372 to 381 (SLLGSSGSSG), 403 to 417 (SSAN…SNHS), and 606 to 616 (PIPAVIPSPSH). Positions 617 to 627 (KPSKTKTSKSS) are enriched in basic residues. A compositionally biased stretch (basic and acidic residues) spans 628-641 (KVKDLSTRSDESPS). Low complexity-rich tracts occupy residues 648–671 (QSST…SPLS) and 783–794 (SSSSSKACKITK). The segment covering 817–828 (VNSTSSRQVGKN) has biased composition (polar residues). Residues 829–847 (SSLALSQSSPSSISSPGHS) are compositionally biased toward low complexity.

The polypeptide is Ataxin-7-like protein 1 (ATXN7L1) (Homo sapiens (Human)).